Reading from the N-terminus, the 457-residue chain is Putative HD domain-containing protein L394 (457 aa).

An HD domain is found at 65–206 (RLEHSIGVYD…GIDVDKFDYL (142 aa)).

This is Putative HD domain-containing protein L394 from Acanthamoeba polyphaga mimivirus (APMV).